The chain runs to 214 residues: Ribosomal RNA large subunit methyltransferase E (214 aa).

S-adenosyl-L-methionine contacts are provided by glycine 60, tryptophan 62, aspartate 86, aspartate 102, and aspartate 127. Lysine 167 acts as the Proton acceptor in catalysis.

The protein belongs to the class I-like SAM-binding methyltransferase superfamily. RNA methyltransferase RlmE family.

Its subcellular location is the cytoplasm. The enzyme catalyses uridine(2552) in 23S rRNA + S-adenosyl-L-methionine = 2'-O-methyluridine(2552) in 23S rRNA + S-adenosyl-L-homocysteine + H(+). Specifically methylates the uridine in position 2552 of 23S rRNA at the 2'-O position of the ribose in the fully assembled 50S ribosomal subunit. This Herminiimonas arsenicoxydans protein is Ribosomal RNA large subunit methyltransferase E.